The chain runs to 98 residues: Cystatin-B (98 aa).

Position 1 is an N-acetylmethionine (Met-1). Residues 46–50 (QVVAG) carry the Secondary area of contact motif.

This sequence belongs to the cystatin family. As to quaternary structure, able to form dimers stabilized by noncovalent forces.

It is found in the cytoplasm. The protein localises to the nucleus. Its function is as follows. This is an intracellular thiol proteinase inhibitor. Tightly binding reversible inhibitor of cathepsins L, H and B. This chain is Cystatin-B (CSTB), found in Macaca fuscata fuscata (Japanese macaque).